A 440-amino-acid chain; its full sequence is Damage-control phosphatase ARMT1 (440 aa).

Asp-252 and Asn-253 together coordinate Mn(2+). Asp-252 to Asn-253 is a substrate binding site. Positions 257 and 290 each coordinate S-adenosyl-L-methionine. Asp-290 lines the Mn(2+) pocket. Residues Asp-366–Arg-370 and Lys-403 each bind substrate. The Subfamily III RTxK motif motif lies at Arg-400–Lys-403.

The protein belongs to the damage-control phosphatase family. Sugar phosphate phosphatase III subfamily. Mn(2+) is required as a cofactor. Requires Ni(2+) as cofactor. Automethylated.

The catalysed reaction is beta-D-fructose 1-phosphate + H2O = D-fructose + phosphate. The enzyme catalyses beta-D-fructose 6-phosphate = dihydroxyacetone + D-glyceraldehyde 3-phosphate. It catalyses the reaction L-glutamyl-[protein] + S-adenosyl-L-methionine = [protein]-L-glutamate 5-O-methyl ester + S-adenosyl-L-homocysteine. Its function is as follows. Metal-dependent phosphatase that shows phosphatase activity against several substrates, including fructose-1-phosphate and fructose-6-phosphate. Its preference for fructose-1-phosphate, a strong glycating agent that causes DNA damage rather than a canonical yeast metabolite, suggests a damage-control function in hexose phosphate metabolism. Has also been shown to have O-methyltransferase activity that methylates glutamate residues of target proteins to form gamma-glutamyl methyl ester residues. Possibly methylates PCNA, suggesting it is involved in the DNA damage response. The polypeptide is Damage-control phosphatase ARMT1 (Xenopus laevis (African clawed frog)).